We begin with the raw amino-acid sequence, 480 residues long: MSRVEGLTSWYSDWQGLSAAILGIGVSGFAAADSLRELGVDVTVYAPEKHTRYNKLLDAIGARYVCAYLDELCEVDVDFIVVSPGISPDNPVIKRLRDRQIPILSEIELAWRVRDKVNTCPWILITGTNGKTTTALLTGSMLAKDGARVAVCGNIGTPVLDAVRNPKGFDYLVVELSSFQLSLLPMHGNGAVKGFSSACVNLDEDHLEWHGAKELYYCAKSRVYHGTTGFCVYNLDDEETKKMVEQACVARNVRAIGFGLCVPDVGQVGIVDGILCDRAFLSARKDSALEITSVEKLEKNKLSMRHIISDVLCAVALARSVETNPLSISRALDEFCLSPHRTEVVAKEMGVMWVNDSKATNPHAVIASLSNFSRVILIFGGLMKGVDVSGIFDRFYETIKAVVVIGKNQSFVGNIKCKKIVCIPDSNDPMSEAVAAADLLATPGDTVLLSPGGSSFDQFESYEHRGNCFINAVKDLVKRK.

127–133 (GTNGKTT) contacts ATP.

This sequence belongs to the MurCDEF family.

The protein localises to the cytoplasm. It catalyses the reaction UDP-N-acetyl-alpha-D-muramoyl-L-alanine + D-glutamate + ATP = UDP-N-acetyl-alpha-D-muramoyl-L-alanyl-D-glutamate + ADP + phosphate + H(+). The protein operates within cell wall biogenesis; peptidoglycan biosynthesis. Functionally, cell wall formation. Catalyzes the addition of glutamate to the nucleotide precursor UDP-N-acetylmuramoyl-L-alanine (UMA). The sequence is that of UDP-N-acetylmuramoylalanine--D-glutamate ligase from Tropheryma whipplei (strain Twist) (Whipple's bacillus).